The primary structure comprises 616 residues: Chaperone protein HscA (616 aa).

It belongs to the heat shock protein 70 family.

In terms of biological role, chaperone involved in the maturation of iron-sulfur cluster-containing proteins. Has a low intrinsic ATPase activity which is markedly stimulated by HscB. Involved in the maturation of IscU. This Pectobacterium carotovorum subsp. carotovorum (strain PC1) protein is Chaperone protein HscA.